We begin with the raw amino-acid sequence, 79 residues long: Defensin 2 (79 aa).

An N-terminal signal peptide occupies residues 1–32 (VQKRTIIMEKKMAGFCIFFLILFLAQEYGVEG). Intrachain disulfides connect cysteine 35–cysteine 79, cysteine 46–cysteine 67, and cysteine 52–cysteine 73.

Belongs to the DEFL family. In terms of assembly, may form dimers. Post-translationally, not glycosylated. In terms of processing, has 4 disulfide bonds.

Its function is as follows. Probably has antifungal activity. This chain is Defensin 2, found in Arachis hypogaea (Peanut).